A 255-amino-acid polypeptide reads, in one-letter code: Endonuclease V (255 aa).

Mg(2+) is bound by residues Asp42 and Asp110.

It belongs to the endonuclease V family. It depends on Mg(2+) as a cofactor.

The protein resides in the cytoplasm. It carries out the reaction Endonucleolytic cleavage at apurinic or apyrimidinic sites to products with a 5'-phosphate.. DNA repair enzyme involved in the repair of deaminated bases. Selectively cleaves double-stranded DNA at the second phosphodiester bond 3' to a deoxyinosine leaving behind the intact lesion on the nicked DNA. The protein is Endonuclease V of Aeropyrum pernix (strain ATCC 700893 / DSM 11879 / JCM 9820 / NBRC 100138 / K1).